Reading from the N-terminus, the 286-residue chain is 2-hydroxy-6-oxo-6-phenylhexa-2,4-dienoate hydrolase (286 aa).

Substrate-binding positions include Gly-42–Gly-43, Asn-51, Asn-111, Ser-180, and Arg-190. His-265 (proton acceptor) is an active-site residue. Substrate is bound at residue Trp-266.

The protein belongs to the AB hydrolase superfamily. BphD family. Homodimer.

It carries out the reaction 2,6-dioxo-6-phenylhexa-3-enoate + H2O = 2-oxopent-4-enoate + benzoate + H(+). It functions in the pathway xenobiotic degradation; biphenyl degradation; 2-hydroxy-2,4-pentadienoate and benzoate from biphenyl: step 4/4. Inhibited by 3-Cl HOPDA. Catalyzes an unusual C-C bond hydrolysis of 2-hydroxy-6-oxo-6-phenylhexa-2,4-dienoic acid (HOPDA) to produce benzoic acid and 2-hydroxy-2,4-pentadienoic acid (HPD). This is 2-hydroxy-6-oxo-6-phenylhexa-2,4-dienoate hydrolase (bphD) from Paraburkholderia xenovorans (strain LB400).